The chain runs to 184 residues: Ras-related protein O-Krev (184 aa).

A GTP-binding site is contributed by 10–17 (GSGGVGKS). The Effector region signature appears at 32 to 40 (YDPTIEDSY). Residues 57 to 61 (DTAGT) and 116 to 119 (NKCD) each bind GTP. Cys-181 carries the post-translational modification Cysteine methyl ester. Residue Cys-181 is the site of S-geranylgeranyl cysteine attachment. Positions 182 to 184 (TLL) are cleaved as a propeptide — removed in mature form.

It belongs to the small GTPase superfamily. Ras family.

Its subcellular location is the cell membrane. The enzyme catalyses GTP + H2O = GDP + phosphate + H(+). The polypeptide is Ras-related protein O-Krev (Diplobatis ommata (Ocellated electric ray)).